The following is a 345-amino-acid chain: Protein RecA (345 aa).

65 to 72 (GPESSGKT) is an ATP binding site.

The protein belongs to the RecA family.

It localises to the cytoplasm. Can catalyze the hydrolysis of ATP in the presence of single-stranded DNA, the ATP-dependent uptake of single-stranded DNA by duplex DNA, and the ATP-dependent hybridization of homologous single-stranded DNAs. It interacts with LexA causing its activation and leading to its autocatalytic cleavage. This chain is Protein RecA, found in Stenotrophomonas maltophilia (strain R551-3).